A 550-amino-acid polypeptide reads, in one-letter code: Phospholipase B-like 1 (550 aa).

The N-terminal stretch at 1–39 (MCHRSHGRSLRPPSPLLLLLPLLLQSPWAAGAAEKHNSA) is a signal peptide. The N-linked (GlcNAc...) (high mannose) asparagine; alternate glycan is linked to asparagine 72. N-linked (GlcNAc...) (hybrid) asparagine; alternate glycosylation is present at asparagine 72. Positions 210-228 (LSPTKSSSLKKFKIWEMGH) are cleaved as a propeptide — removed in mature form. 2 N-linked (GlcNAc...) (high mannose) asparagine; alternate glycosylation sites follow: asparagine 309 and asparagine 412. Asparagine 309 and asparagine 412 each carry an N-linked (GlcNAc...) (hybrid) asparagine; alternate glycan. 2 disulfides stabilise this stretch: cysteine 471-cysteine 476 and cysteine 475-cysteine 490. Asparagine 527 carries N-linked (GlcNAc...) (high mannose) asparagine; alternate glycosylation. A glycan (N-linked (GlcNAc...) (hybrid) asparagine; alternate) is linked at asparagine 527.

This sequence belongs to the phospholipase B-like family. In terms of assembly, may form a homodimer, each monomer is composed of a chain A and a chain B. Post-translationally, the maturation cleavages that produces chains A and B are required to open the putative substrate binding pocket. Both chains A and B remain associated in the mature protein.

Its subcellular location is the lysosome. In terms of biological role, exhibits weak phospholipase activity, acting on various phospholipids, including phosphatidylcholine, phosphatidylinositol, phosphatidylethanolamine and lysophospholipids. However, in view of the small size of the putative binding pocket, it has been proposed that it may act rather as an amidase or a peptidase. The polypeptide is Phospholipase B-like 1 (Plbd1) (Rattus norvegicus (Rat)).